The sequence spans 61 residues: Potassium channel toxin alpha-KTx 6.8 (61 aa).

Positions 1–23 are cleaved as a signal peptide; that stretch reads MNAKFILLLLVVTTTILLPDTQG. Disulfide bonds link Cys29–Cys50, Cys35–Cys55, Cys39–Cys57, and Cys45–Cys60. Cys60 carries the post-translational modification Cysteine amide.

This sequence belongs to the short scorpion toxin superfamily. Potassium channel inhibitor family. Alpha-KTx 06 subfamily. In terms of tissue distribution, expressed by the venom gland.

It localises to the secreted. In terms of biological role, blocker of voltage-gated potassium channels. The protein is Potassium channel toxin alpha-KTx 6.8 of Opistophthalmus carinatus (African yellow leg scorpion).